A 288-amino-acid chain; its full sequence is Elongation factor Ts (288 aa).

Residues 79–82 (TDFV) form an involved in Mg(2+) ion dislocation from EF-Tu region.

This sequence belongs to the EF-Ts family.

The protein localises to the cytoplasm. Its function is as follows. Associates with the EF-Tu.GDP complex and induces the exchange of GDP to GTP. It remains bound to the aminoacyl-tRNA.EF-Tu.GTP complex up to the GTP hydrolysis stage on the ribosome. The chain is Elongation factor Ts from Ehrlichia canis (strain Jake).